The primary structure comprises 151 residues: Apolipoprotein A-I (151 aa).

Positions 1–18 are cleaved as a signal peptide; it reads MKAVVLTLAVLFLTGSQA. Positions 19–24 are excised as a propeptide; the sequence is RHFWQQ. Repeat copies occupy residues 67 to 88 and 89 to 110. The tract at residues 67–143 is 4 X approximate tandem repeats; the sequence is LKLLDNWDTL…EVELYRQKVA (77 aa). The residue at position 109 (Met109) is a Methionine sulfoxide. A 3; half-length repeat occupies 111 to 121; sequence KDLEEVKQKVQ. Copy 4 of the repeat occupies 122–143; sequence PYLDDFQKKWQEEVELYRQKVA.

It belongs to the apolipoprotein A1/A4/E family. In terms of assembly, homodimer. Interacts with APOA1BP and CLU. Component of a sperm activating protein complex (SPAP), consisting of APOA1, an immunoglobulin heavy chain, an immunoglobulin light chain and albumin. Interacts with NDRG1. Interacts with SCGB3A2. Interacts with NAXE and YJEFN3. Post-translationally, glycosylated. In terms of processing, palmitoylated. Phosphorylation sites are present in the extracellular medium. Major protein of plasma HDL, also found in chylomicrons.

Its subcellular location is the secreted. Functionally, participates in the reverse transport of cholesterol from tissues to the liver for excretion by promoting cholesterol efflux from tissues and by acting as a cofactor for the lecithin cholesterol acyltransferase (LCAT). As part of the SPAP complex, activates spermatozoa motility. This is Apolipoprotein A-I (APOA1) from Panthera tigris altaica (Siberian tiger).